A 454-amino-acid polypeptide reads, in one-letter code: UPF0210 protein Memar_2269 (454 aa).

Belongs to the UPF0210 family.

In Methanoculleus marisnigri (strain ATCC 35101 / DSM 1498 / JR1), this protein is UPF0210 protein Memar_2269.